Consider the following 171-residue polypeptide: 3-hydroxydecanoyl-[acyl-carrier-protein] dehydratase (171 aa).

His71 is a catalytic residue.

Belongs to the thioester dehydratase family. FabA subfamily. In terms of assembly, homodimer.

The protein resides in the cytoplasm. It carries out the reaction a (3R)-hydroxyacyl-[ACP] = a (2E)-enoyl-[ACP] + H2O. It catalyses the reaction (3R)-hydroxydecanoyl-[ACP] = (2E)-decenoyl-[ACP] + H2O. The enzyme catalyses (2E)-decenoyl-[ACP] = (3Z)-decenoyl-[ACP]. The protein operates within lipid metabolism; fatty acid biosynthesis. Its function is as follows. Necessary for the introduction of cis unsaturation into fatty acids. Catalyzes the dehydration of (3R)-3-hydroxydecanoyl-ACP to E-(2)-decenoyl-ACP and then its isomerization to Z-(3)-decenoyl-ACP. Can catalyze the dehydratase reaction for beta-hydroxyacyl-ACPs with saturated chain lengths up to 16:0, being most active on intermediate chain length. This chain is 3-hydroxydecanoyl-[acyl-carrier-protein] dehydratase, found in Rhizobium rhizogenes (strain K84 / ATCC BAA-868) (Agrobacterium radiobacter).